The following is a 395-amino-acid chain: Mannan polymerase complexes subunit MNN9 (395 aa).

At 2-17 (SLSLVSYRLRKNPWVN) the chain is on the cytoplasmic side. Residues 18-33 (IFLPVLAIFLIYIIFF) form a helical; Signal-anchor for type II membrane protein membrane-spanning segment. The Lumenal segment spans residues 34–395 (QRDQSLLGLN…LVYHIEEENH (362 aa)).

Belongs to the ANP1/MMN9/VAN1 family. As to quaternary structure, the M-Pol I complex contains MNN9 and VAN1. The M-Pol II complex is composed of ANP1, MNN9, MNN10, MNN11 and HOC1.

The protein localises to the endoplasmic reticulum membrane. The protein resides in the golgi apparatus membrane. It functions in the pathway protein modification; protein glycosylation. In terms of biological role, the M-Pol I and M-Pol II complexes possess alpha-1,6-mannosyltransferase activity and are probably involved in the elongation of the mannan backbone of N-linked glycans on cell wall and periplasmic proteins. May also provide alpha-1,2-mannosyltransferase activity to the M-Pol I complex. This is Mannan polymerase complexes subunit MNN9 (MNN9) from Saccharomyces cerevisiae (strain ATCC 204508 / S288c) (Baker's yeast).